Here is a 645-residue protein sequence, read N- to C-terminus: Exoribonuclease 2 (645 aa).

The RNB domain occupies 191–517 (REDLTELNFI…MNHRLLKALI (327 aa)). The region spanning 563 to 645 (HIRYSAEIID…DNRSIIAKIV (83 aa)) is the S1 motif domain.

The protein belongs to the RNR ribonuclease family. RNase II subfamily.

The protein resides in the cytoplasm. The catalysed reaction is Exonucleolytic cleavage in the 3'- to 5'-direction to yield nucleoside 5'-phosphates.. In terms of biological role, involved in mRNA degradation. Hydrolyzes single-stranded polyribonucleotides processively in the 3' to 5' direction. This is Exoribonuclease 2 from Baumannia cicadellinicola subsp. Homalodisca coagulata.